Consider the following 154-residue polypeptide: Ascorbate-specific PTS system EIIA component (154 aa).

One can recognise a PTS EIIA type-2 domain in the interval 6–150; it reads SLAENNSIRL…QEVLDLIDRT (145 aa). Catalysis depends on histidine 68, which acts as the Tele-phosphohistidine intermediate. A Phosphohistidine modification is found at histidine 68.

The protein localises to the cytoplasm. The phosphoenolpyruvate-dependent sugar phosphotransferase system (sugar PTS), a major carbohydrate active transport system, catalyzes the phosphorylation of incoming sugar substrates concomitantly with their translocation across the cell membrane. The enzyme II UlaABC PTS system is involved in ascorbate transport. The sequence is that of Ascorbate-specific PTS system EIIA component (ulaC) from Salmonella paratyphi A (strain ATCC 9150 / SARB42).